A 301-amino-acid polypeptide reads, in one-letter code: Ornithine carbamoyltransferase (301 aa).

Carbamoyl phosphate-binding positions include R100 and 127–130; that span reads HPCQ. Residues N158, D221, and 225–226 each bind L-ornithine; that span reads SM. Carbamoyl phosphate-binding residues include C260 and R288.

This sequence belongs to the aspartate/ornithine carbamoyltransferase superfamily. OTCase family. Homododecamer.

It is found in the cytoplasm. It carries out the reaction carbamoyl phosphate + L-ornithine = L-citrulline + phosphate + H(+). It participates in amino-acid biosynthesis; L-arginine biosynthesis; L-arginine from L-ornithine and carbamoyl phosphate: step 1/3. Reversibly catalyzes the transfer of the carbamoyl group from carbamoyl phosphate (CP) to the N(epsilon) atom of ornithine (ORN) to produce L-citrulline. This Moritella profunda protein is Ornithine carbamoyltransferase (argF).